Here is a 145-residue protein sequence, read N- to C-terminus: 3-dehydroquinate dehydratase (145 aa).

The active-site Proton acceptor is the Tyr24. Substrate contacts are provided by Asn75, His81, and Asp88. His101 serves as the catalytic Proton donor. Residues 102–103 (IS) and Arg112 contribute to the substrate site.

This sequence belongs to the type-II 3-dehydroquinase family. As to quaternary structure, homododecamer.

It carries out the reaction 3-dehydroquinate = 3-dehydroshikimate + H2O. Its pathway is metabolic intermediate biosynthesis; chorismate biosynthesis; chorismate from D-erythrose 4-phosphate and phosphoenolpyruvate: step 3/7. Its function is as follows. Catalyzes a trans-dehydration via an enolate intermediate. This Rhizobium etli (strain CIAT 652) protein is 3-dehydroquinate dehydratase.